The sequence spans 1615 residues: Ferredoxin-dependent glutamate synthase, chloroplastic (1615 aa).

A chloroplast-targeting transit peptide spans 1 to 52 (MATLPRAAAAAAPSPAAALLPLPRAAPLLAGRAAARSAARRLRARGTRAPPL). The Nucleophile role is filled by Cys97. One can recognise a Glutamine amidotransferase type-2 domain in the interval 97 to 496 (CGVGFVANLK…PGMMITVDLQ (400 aa)). An FMN-binding site is contributed by 1175 to 1232 (LSETHQTLIQNGLRERVVLRVDGGFRSGLDVLMAAAMGADEYGFGSVAMIATGCVMAR). [3Fe-4S] cluster-binding residues include Cys1228, Cys1234, and Cys1239.

The protein belongs to the glutamate synthase family. Requires [3Fe-4S] cluster as cofactor. It depends on FAD as a cofactor. FMN serves as cofactor. Expressed in leaf blades and at lower levels in roots.

The protein localises to the plastid. It is found in the chloroplast. It carries out the reaction 2 oxidized [2Fe-2S]-[ferredoxin] + 2 L-glutamate = L-glutamine + 2 reduced [2Fe-2S]-[ferredoxin] + 2-oxoglutarate + 2 H(+). Its pathway is amino-acid biosynthesis; L-glutamate biosynthesis via GLT pathway; L-glutamate from 2-oxoglutarate and L-glutamine (ferredoxin route): step 1/1. It participates in energy metabolism; nitrogen metabolism. Functionally, involved in glutamate biosynthesis in leaf. Required for the reassimilation of ammonium ions generated during photorespiration. The protein is Ferredoxin-dependent glutamate synthase, chloroplastic (GLU) of Oryza sativa subsp. japonica (Rice).